Reading from the N-terminus, the 217-residue chain is Thiamine-phosphate synthase (217 aa).

4-amino-2-methyl-5-(diphosphooxymethyl)pyrimidine-binding positions include 45–49 (QFRQK) and asparagine 81. Mg(2+) is bound by residues aspartate 82 and aspartate 101. Serine 120 contributes to the 4-amino-2-methyl-5-(diphosphooxymethyl)pyrimidine binding site. Position 147–149 (147–149 (TPS)) interacts with 2-[(2R,5Z)-2-carboxy-4-methylthiazol-5(2H)-ylidene]ethyl phosphate. Position 150 (lysine 150) interacts with 4-amino-2-methyl-5-(diphosphooxymethyl)pyrimidine. 2-[(2R,5Z)-2-carboxy-4-methylthiazol-5(2H)-ylidene]ethyl phosphate contacts are provided by residues glycine 179 and 197 to 198 (IS).

This sequence belongs to the thiamine-phosphate synthase family. It depends on Mg(2+) as a cofactor.

It carries out the reaction 2-[(2R,5Z)-2-carboxy-4-methylthiazol-5(2H)-ylidene]ethyl phosphate + 4-amino-2-methyl-5-(diphosphooxymethyl)pyrimidine + 2 H(+) = thiamine phosphate + CO2 + diphosphate. The enzyme catalyses 2-(2-carboxy-4-methylthiazol-5-yl)ethyl phosphate + 4-amino-2-methyl-5-(diphosphooxymethyl)pyrimidine + 2 H(+) = thiamine phosphate + CO2 + diphosphate. It catalyses the reaction 4-methyl-5-(2-phosphooxyethyl)-thiazole + 4-amino-2-methyl-5-(diphosphooxymethyl)pyrimidine + H(+) = thiamine phosphate + diphosphate. Its pathway is cofactor biosynthesis; thiamine diphosphate biosynthesis; thiamine phosphate from 4-amino-2-methyl-5-diphosphomethylpyrimidine and 4-methyl-5-(2-phosphoethyl)-thiazole: step 1/1. Its function is as follows. Condenses 4-methyl-5-(beta-hydroxyethyl)thiazole monophosphate (THZ-P) and 2-methyl-4-amino-5-hydroxymethyl pyrimidine pyrophosphate (HMP-PP) to form thiamine monophosphate (TMP). In Helicobacter pylori (strain J99 / ATCC 700824) (Campylobacter pylori J99), this protein is Thiamine-phosphate synthase.